The chain runs to 346 residues: Hydroxycarboxylic acid receptor 1 (346 aa).

Residues 1–21 (MYNGSCCRIEGDTISQVMPPL) lie on the Extracellular side of the membrane. N-linked (GlcNAc...) asparagine glycosylation occurs at N3. The chain crosses the membrane as a helical span at residues 22–42 (LIVAFVLGALGNGVALCGFCF). The Cytoplasmic portion of the chain corresponds to 43–49 (HMKTWKP). Residues 50–70 (STVYLFNLAVADFLLMICLPF) traverse the membrane as a helical segment. The Extracellular segment spans residues 71–89 (RTDYYLRRRHWAFGDIPCR). A disulfide bridge connects residues C88 and C165. Residues 90–110 (VGLFTLAMNRAGSIVFLTVVA) traverse the membrane as a helical segment. Over 111 to 130 (ADRYFKVVHPHHAVNTISTR) the chain is Cytoplasmic. Residues 131 to 151 (VAAGIVCTLWALVILGTVYLL) traverse the membrane as a helical segment. Topologically, residues 152-182 (LENHLCVQETAVSCESFIMESANGWHDIMFQ) are extracellular. The helical transmembrane segment at 183 to 203 (LEFFMPLGIILFCSFKIVWSL) threads the bilayer. Over 204-220 (RRRQQLARQARMKKATR) the chain is Cytoplasmic. The chain crosses the membrane as a helical span at residues 221-241 (FIMVVAIVFITCYLPSVSARL). The Extracellular portion of the chain corresponds to 242–261 (YFLWTVPSSACDPSVHGALH). The helical transmembrane segment at 262–281 (ITLSFTYMNSMLDPLVYYFS) threads the bilayer. Residues 282–346 (SPSFPKFYNK…QWDPHIVEWH (65 aa)) are Cytoplasmic-facing.

The protein belongs to the G-protein coupled receptor 1 family. Expressed abundantly in brown and white fat. It also detectable at lower levels in liver, kidney, skeletal muscle, brain and pituitary. Not detected in frontal, temporal and occipital lobes of the cortex, basal forebrain, caudate nucleus, nucleus accumbens and hippocampus.

The protein localises to the cell membrane. Acts as a receptor for L-lactate and mediates its anti-lipolytic effect through a G(i)-protein-mediated pathway. The sequence is that of Hydroxycarboxylic acid receptor 1 (HCAR1) from Homo sapiens (Human).